Here is a 138-residue protein sequence, read N- to C-terminus: Small ribosomal subunit protein uS8c (138 aa).

It belongs to the universal ribosomal protein uS8 family. Part of the 30S ribosomal subunit.

The protein localises to the plastid. It localises to the chloroplast. Its function is as follows. One of the primary rRNA binding proteins, it binds directly to 16S rRNA central domain where it helps coordinate assembly of the platform of the 30S subunit. This is Small ribosomal subunit protein uS8c (rps8) from Chlorella vulgaris (Green alga).